The sequence spans 106 residues: UPF0145 protein CKL_2433 (106 aa).

The protein belongs to the UPF0145 family.

This chain is UPF0145 protein CKL_2433, found in Clostridium kluyveri (strain ATCC 8527 / DSM 555 / NBRC 12016 / NCIMB 10680 / K1).